We begin with the raw amino-acid sequence, 665 residues long: Mitochondrial Rho GTPase 1 (665 aa).

Over 1–634 the chain is Cytoplasmic; sequence MTNDVIRIVV…NQDPEEETNT (634 aa). The Miro 1 domain occupies 3–177; sequence NDVIRIVVCG…FYLCQKAVMH (175 aa). Residues 12 to 19, 61 to 67, and 119 to 122 each bind GTP; these read GDEGVGKS, DTQFSNS, and NVFD. 2 EF-hand domains span residues 193 to 228 and 313 to 348; these read NAVA…CFGR and EGYR…TPGI. Ca(2+) is bound by residues D206, D208, D210, Y212, E217, D326, D328, D330, and E337. The region spanning 452 to 618 is the Miro 2 domain; that stretch reads RSVFNCFVLG…FIQLAEAAQQ (167 aa). Residues 461–468, 498–502, and 567–570 each bind GTP; these read GSHMSGKT, EMTGG, and LKAD. The helical; Anchor for type IV membrane protein transmembrane segment at 635–655 threads the bilayer; it reads IMPFALAGGATVLLAAAVAWI. The Mitochondrial intermembrane portion of the chain corresponds to 656 to 665; that stretch reads FKNVRVAGRE.

Belongs to the mitochondrial Rho GTPase family.

Its subcellular location is the mitochondrion outer membrane. In terms of biological role, mitochondrial GTPase involved in mitochondrial trafficking. Probably involved in control of anterograde transport of mitochondria and their subcellular distribution. This is Mitochondrial Rho GTPase 1 (GEM1) from Yarrowia lipolytica (strain CLIB 122 / E 150) (Yeast).